The chain runs to 288 residues: NAD(P)H-hydrate epimerase (288 aa).

The N-terminal 32 residues, 1-32 (MSGLRALLGLGLLVAGSRLSRVRVQAGSCRAG), are a transit peptide targeting the mitochondrion. Ser49 carries the post-translational modification Phosphoserine. The YjeF N-terminal domain occupies 65–275 (AQAVDQELFN…ALEKKYQLNL (211 aa)). 119-123 (NNGGD) provides a ligand contact to (6S)-NADPHX. Asn120 lines the K(+) pocket. N6-succinyllysine is present on Lys144. Position 185 (Asp185) interacts with K(+). (6S)-NADPHX contacts are provided by residues 189 to 195 (GFSFTGE) and Asp218. Residue Ser221 participates in K(+) binding.

The protein belongs to the NnrE/AIBP family. As to quaternary structure, homodimer. Interacts with APOA1 and APOA2. Requires K(+) as cofactor. Undergoes physiological phosphorylation during sperm capacitation, downstream to PKA activation.

Its subcellular location is the mitochondrion. The protein resides in the secreted. It catalyses the reaction (6R)-NADHX = (6S)-NADHX. The catalysed reaction is (6R)-NADPHX = (6S)-NADPHX. Catalyzes the epimerization of the S- and R-forms of NAD(P)HX, a damaged form of NAD(P)H that is a result of enzymatic or heat-dependent hydration. This is a prerequisite for the S-specific NAD(P)H-hydrate dehydratase to allow the repair of both epimers of NAD(P)HX. Accelerates cholesterol efflux from endothelial cells to high-density lipoprotein (HDL) and thereby regulates angiogenesis. The protein is NAD(P)H-hydrate epimerase of Bos taurus (Bovine).